The sequence spans 226 residues: Endonuclease V (226 aa).

Mg(2+) is bound by residues D42 and D110.

This sequence belongs to the endonuclease V family. Mg(2+) serves as cofactor.

The protein localises to the cytoplasm. It catalyses the reaction Endonucleolytic cleavage at apurinic or apyrimidinic sites to products with a 5'-phosphate.. DNA repair enzyme involved in the repair of deaminated bases. Selectively cleaves double-stranded DNA at the second phosphodiester bond 3' to a deoxyinosine leaving behind the intact lesion on the nicked DNA. This chain is Endonuclease V, found in Thermus thermophilus (strain ATCC BAA-163 / DSM 7039 / HB27).